The sequence spans 146 residues: Globin (146 aa).

At Ala1 the chain carries N-acetylalanine. The 146-residue stretch at 1-146 folds into the Globin domain; the sequence is ALSAAEAEVV…IIDAMKKAGK (146 aa). His95 is a binding site for heme b.

This sequence belongs to the globin family. In terms of assembly, monomer.

This chain is Globin, found in Dolabella auricularia (Shoulderblade sea cat).